Here is a 305-residue protein sequence, read N- to C-terminus: Serine/threonine-protein phosphatase 4 catalytic subunit (305 aa).

The Mn(2+) site is built by aspartate 52, histidine 54, aspartate 80, and asparagine 112. Catalysis depends on histidine 113, which acts as the Proton donor. Positions 162 and 236 each coordinate Mn(2+).

The protein belongs to the PPP phosphatase family. PP-4 (PP-X) subfamily. In terms of assembly, serine/threonine-protein phosphatase 4 (PP4) occurs in different assemblies of the catalytic and one or more regulatory subunits. Probably part of a PP4 complex containing ppp4c and ppp4r2. Interacts with smkA. Requires Mn(2+) as cofactor.

Its subcellular location is the cytoplasm. The protein localises to the nucleus. It carries out the reaction O-phospho-L-seryl-[protein] + H2O = L-seryl-[protein] + phosphate. The catalysed reaction is O-phospho-L-threonyl-[protein] + H2O = L-threonyl-[protein] + phosphate. In terms of biological role, required for development, chemotaxis and the expression of numerous genes. This Dictyostelium discoideum (Social amoeba) protein is Serine/threonine-protein phosphatase 4 catalytic subunit (ppp4c).